The sequence spans 258 residues: ADP-dependent (S)-NAD(P)H-hydrate dehydratase (258 aa).

Positions 1–258 (MGRLQRTLSN…VIECIPKTIR (258 aa)) constitute a YjeF C-terminal domain. Position 201 (Gly-201) interacts with AMP. Asp-202 contacts (6S)-NADPHX.

This sequence belongs to the NnrD/CARKD family. In terms of assembly, homotetramer. It depends on Mg(2+) as a cofactor.

It carries out the reaction (6S)-NADHX + ADP = AMP + phosphate + NADH + H(+). The catalysed reaction is (6S)-NADPHX + ADP = AMP + phosphate + NADPH + H(+). Catalyzes the dehydration of the S-form of NAD(P)HX at the expense of ADP, which is converted to AMP. Together with NAD(P)HX epimerase, which catalyzes the epimerization of the S- and R-forms, the enzyme allows the repair of both epimers of NAD(P)HX, a damaged form of NAD(P)H that is a result of enzymatic or heat-dependent hydration. This is ADP-dependent (S)-NAD(P)H-hydrate dehydratase from Natrialba magadii (strain ATCC 43099 / DSM 3394 / CCM 3739 / CIP 104546 / IAM 13178 / JCM 8861 / NBRC 102185 / NCIMB 2190 / MS3) (Natronobacterium magadii).